A 70-amino-acid chain; its full sequence is MKQDIHPKYNEVTVVCANCGNSFVTRSTRPSIKVDICNNCHPFYTGKQSIVDTAGRVERFNKRFAKKAQA.

Belongs to the bacterial ribosomal protein bL31 family. Type A subfamily. Part of the 50S ribosomal subunit.

Its function is as follows. Binds the 23S rRNA. The sequence is that of Large ribosomal subunit protein bL31 from Chlorobium chlorochromatii (strain CaD3).